Reading from the N-terminus, the 878-residue chain is Alanine--tRNA ligase (878 aa).

Zn(2+)-binding residues include His-564, His-568, Cys-665, and His-669.

It belongs to the class-II aminoacyl-tRNA synthetase family. It depends on Zn(2+) as a cofactor.

The protein resides in the cytoplasm. The catalysed reaction is tRNA(Ala) + L-alanine + ATP = L-alanyl-tRNA(Ala) + AMP + diphosphate. Functionally, catalyzes the attachment of alanine to tRNA(Ala) in a two-step reaction: alanine is first activated by ATP to form Ala-AMP and then transferred to the acceptor end of tRNA(Ala). Also edits incorrectly charged Ser-tRNA(Ala) and Gly-tRNA(Ala) via its editing domain. The polypeptide is Alanine--tRNA ligase (Natranaerobius thermophilus (strain ATCC BAA-1301 / DSM 18059 / JW/NM-WN-LF)).